The chain runs to 318 residues: NADH-ubiquinone oxidoreductase chain 1 (318 aa).

8 consecutive transmembrane segments (helical) span residues 2–22 (FLIN…FLTL), 69–89 (FLFT…WAPL), 102–122 (LLFI…SGWA), 146–166 (MTTI…TAFA), 171–191 (HLWL…STLA), 222–242 (LFFM…VILF), 253–273 (EIST…FLWV), and 294–314 (LPLT…LACI).

Belongs to the complex I subunit 1 family.

It is found in the mitochondrion inner membrane. It catalyses the reaction a ubiquinone + NADH + 5 H(+)(in) = a ubiquinol + NAD(+) + 4 H(+)(out). Core subunit of the mitochondrial membrane respiratory chain NADH dehydrogenase (Complex I) that is believed to belong to the minimal assembly required for catalysis. Complex I functions in the transfer of electrons from NADH to the respiratory chain. The immediate electron acceptor for the enzyme is believed to be ubiquinone. The protein is NADH-ubiquinone oxidoreductase chain 1 (MT-ND1) of Loxodonta africana (African elephant).